A 652-amino-acid chain; its full sequence is Proline-rich receptor-like protein kinase PERK1 (652 aa).

The tract at residues 1–137 (MSTAPSPGTT…PPSDSSDGLS (137 aa)) is disordered. At 1–139 (MSTAPSPGTT…SDSSDGLSTG (139 aa)) the chain is on the extracellular side. The span at 8 to 19 (GTTPSPSPPSPP) shows a compositional bias: pro residues. N-linked (GlcNAc...) asparagine glycosylation is found at asparagine 21 and asparagine 50. The segment covering 26–112 (TPPPAASSPP…PSPNQGPPNT (87 aa)) has biased composition (pro residues). The segment covering 113 to 137 (PSGSTPRTPSNTKPSPPSDSSDGLS) has biased composition (low complexity). Residues 140–160 (VVVGIAIGGVAILVILTLICL) traverse the membrane as a helical segment. The Cytoplasmic portion of the chain corresponds to 161-652 (LCKKKRRRRH…TGQGYSGPSL (492 aa)). A disordered region spans residues 169 to 251 (RHDDEAAYYV…GGSDYSDLPV (83 aa)). Residues 203-213 (NASRPSDNHVV) show a composition bias toward polar residues. Positions 216-236 (LPPPKPPSPPRKPPPPPPPPA) are enriched in pro residues. A Phosphothreonine modification is found at threonine 269. The Protein kinase domain maps to 280–559 (FSEANLLGQG…VRALEGNVSL (280 aa)). ATP-binding positions include 286–294 (LGQGGFGYV) and lysine 308. Residue tyrosine 353 is modified to Phosphotyrosine. The active-site Proton acceptor is the aspartate 404. 2 positions are modified to phosphoserine: serine 408 and serine 437. A phosphothreonine mark is found at threonine 438 and threonine 443. A Phosphotyrosine modification is found at tyrosine 451. Positions 605-616 (YGTTGEYSNPTS) are enriched in polar residues. The interval 605–652 (YGTTGEYSNPTSDYGLYPSGSSSEGQATREMEMGKIKKTGQGYSGPSL) is disordered.

The protein belongs to the protein kinase superfamily. Ser/Thr protein kinase family. In terms of tissue distribution, mostly expressed in inflorescence bolt, flower buds and siliques, and, to a lower extent, in roots, seedlings and leaves.

The protein resides in the cell membrane. It catalyses the reaction L-seryl-[protein] + ATP = O-phospho-L-seryl-[protein] + ADP + H(+). The catalysed reaction is L-threonyl-[protein] + ATP = O-phospho-L-threonyl-[protein] + ADP + H(+). This chain is Proline-rich receptor-like protein kinase PERK1 (PERK1), found in Arabidopsis thaliana (Mouse-ear cress).